A 145-amino-acid chain; its full sequence is ATP synthase epsilon chain (145 aa).

Belongs to the ATPase epsilon chain family. In terms of assembly, F-type ATPases have 2 components, CF(1) - the catalytic core - and CF(0) - the membrane proton channel. CF(1) has five subunits: alpha(3), beta(3), gamma(1), delta(1), epsilon(1). CF(0) has three main subunits: a, b and c.

Its subcellular location is the cell inner membrane. Produces ATP from ADP in the presence of a proton gradient across the membrane. This Francisella tularensis subsp. mediasiatica (strain FSC147) protein is ATP synthase epsilon chain.